The following is a 234-amino-acid chain: Large ribosomal subunit protein uL1 (234 aa).

It belongs to the universal ribosomal protein uL1 family. Part of the 50S ribosomal subunit.

In terms of biological role, binds directly to 23S rRNA. The L1 stalk is quite mobile in the ribosome, and is involved in E site tRNA release. Its function is as follows. Protein L1 is also a translational repressor protein, it controls the translation of the L11 operon by binding to its mRNA. In Anaeromyxobacter sp. (strain Fw109-5), this protein is Large ribosomal subunit protein uL1.